We begin with the raw amino-acid sequence, 484 residues long: MKILFAVSECTPFVKSGGLADVAGALPKALARLGNEVAVMLPKYSQIPEPWKKRMKKQAECTVAVGWRQQYCGIEHMAENDVNYYFIDNEYYFNRDSLYGHYDDGERFAFFSRAVLEAAKVVNVQADIVHTHDWHTAMVNYLLKEEYRKHPFYERMKSVLTIHNLQFQGIFPPDVTHDLLGLEMDHFHYERLECNGFVNFMKAGIIAADHVTTVSPTYRNEIMTPYYGEQLEQVLQYREDDVTGILNGIDDTFYQPKSDPYIEAQYDSGDLACKLENKTKLQQRMGLPEKNDIPLISMVTRLTKQKGLDLVRRIMHELLEEQDIQLVVLGTGEREFEDYFRYAEFAFHEKCRAYIGFDEPLAHQIYAGSDMFLMPSKFEPCGLGQLIALQYGAIPIVRETGGLYDTVRAYQEEEGTGNGFTFSAFNAHDLKFTIERALSFYCQQDVWKSIVKTAMNADYSWGKSAKEYQRIFEQVTRSGRDVLE.

Lys15 contacts ADP-alpha-D-glucose.

It belongs to the glycosyltransferase 1 family. Bacterial/plant glycogen synthase subfamily.

It catalyses the reaction [(1-&gt;4)-alpha-D-glucosyl](n) + ADP-alpha-D-glucose = [(1-&gt;4)-alpha-D-glucosyl](n+1) + ADP + H(+). It functions in the pathway glycan biosynthesis; glycogen biosynthesis. Functionally, synthesizes alpha-1,4-glucan chains using ADP-glucose. The polypeptide is Glycogen synthase (glgA) (Bacillus subtilis (strain 168)).